The primary structure comprises 420 residues: Xyloglucan O-acetyltransferase 4 (420 aa).

Residues 1–30 (MTMHEKMKLPSCSCSAFKCGKKDRWLNMER) lie on the Cytoplasmic side of the membrane. The chain crosses the membrane as a helical; Signal-anchor for type II membrane protein span at residues 31 to 51 (PIPFLLIGLTTILSVFILYTL). Over 52–420 (NPLKFVIEHN…LLLAVLRRLD (369 aa)) the chain is Lumenal. 4 cysteine pairs are disulfide-bonded: Cys78/Cys128, Cys99/Cys164, Cys108/Cys400, and Cys323/Cys396. Asn96 carries N-linked (GlcNAc...) asparagine glycosylation. The GDS motif motif lies at 151 to 153 (GDS). Ser153 acts as the Nucleophile in catalysis. Asn192, Asn212, Asn270, and Asn324 each carry an N-linked (GlcNAc...) asparagine glycan. Residue Asp395 is the Proton donor of the active site. Positions 395-398 (DCVH) match the DXXH motif motif. His398 serves as the catalytic Proton acceptor.

Belongs to the PC-esterase family. TBL subfamily.

It localises to the golgi apparatus membrane. Its function is as follows. Xyloglucan acetyltransferase that catalyzes the acetylation of fucosylated Gal residues on xyloglucan side chains. Predominantly catalyze 6-O-monoacetylation of Gal residues in the Fuc-Gal-Xyl trisaccharide side chains of xyloglucan oligomers. This chain is Xyloglucan O-acetyltransferase 4, found in Populus trichocarpa (Western balsam poplar).